Here is a 529-residue protein sequence, read N- to C-terminus: Zinc finger protein 572 (529 aa).

Positions 1 to 62 (MEQEKKLLVS…EWSKRHRPQH (62 aa)) are disordered. Glycyl lysine isopeptide (Lys-Gly) (interchain with G-Cter in SUMO2) cross-links involve residues Lys-5 and Lys-6. Positions 26–35 (TGDTSMNNLE) are enriched in polar residues. Basic and acidic residues predominate over residues 36–55 (TVHHNNSKADKLKEKPSEWS). C2H2-type zinc fingers lie at residues 132–154 (YKCS…QRTH), 160–182 (YKCS…LRMH), 188–210 (YQCG…ERTH), 216–238 (YKCP…HRSH), 244–266 (YECS…QRTH), 272–294 (YKCP…QRTH), 300–322 (YKCL…QRIH), 328–350 (YQCP…QKMH), 384–406 (YRCC…QRTH), 412–434 (YRCS…QRTH), 440–462 (YKCP…RRTH), and 468–490 (YKCT…RKIH).

Belongs to the krueppel C2H2-type zinc-finger protein family.

It is found in the nucleus. Functionally, may be involved in transcriptional regulation. This chain is Zinc finger protein 572 (ZNF572), found in Homo sapiens (Human).